A 100-amino-acid chain; its full sequence is Co-chaperonin GroES (100 aa).

The protein belongs to the GroES chaperonin family. Heptamer of 7 subunits arranged in a ring. Interacts with the chaperonin GroEL.

It localises to the cytoplasm. In terms of biological role, together with the chaperonin GroEL, plays an essential role in assisting protein folding. The GroEL-GroES system forms a nano-cage that allows encapsulation of the non-native substrate proteins and provides a physical environment optimized to promote and accelerate protein folding. GroES binds to the apical surface of the GroEL ring, thereby capping the opening of the GroEL channel. In Rhodothermus marinus (Rhodothermus obamensis), this protein is Co-chaperonin GroES.